The following is a 367-amino-acid chain: Phosphoribosylaminoimidazole-succinocarboxamide synthase (367 aa).

Belongs to the SAICAR synthetase family.

It carries out the reaction 5-amino-1-(5-phospho-D-ribosyl)imidazole-4-carboxylate + L-aspartate + ATP = (2S)-2-[5-amino-1-(5-phospho-beta-D-ribosyl)imidazole-4-carboxamido]succinate + ADP + phosphate + 2 H(+). The protein operates within purine metabolism; IMP biosynthesis via de novo pathway; 5-amino-1-(5-phospho-D-ribosyl)imidazole-4-carboxamide from 5-amino-1-(5-phospho-D-ribosyl)imidazole-4-carboxylate: step 1/2. The protein is Phosphoribosylaminoimidazole-succinocarboxamide synthase of Vibrio vulnificus (strain CMCP6).